A 490-amino-acid polypeptide reads, in one-letter code: Arginine decarboxylase (490 aa).

Residue lysine 226 is modified to N6-(pyridoxal phosphate)lysine.

Belongs to the Orn/Lys/Arg decarboxylase class-I family. The cofactor is pyridoxal 5'-phosphate.

It localises to the cytoplasm. The enzyme catalyses L-arginine + H(+) = agmatine + CO2. It functions in the pathway amine and polyamine biosynthesis; agmatine biosynthesis; agmatine from L-arginine: step 1/1. In terms of biological role, catalyzes the formation of agmatine from arginine. The chain is Arginine decarboxylase (speA) from Bacillus subtilis (strain 168).